Reading from the N-terminus, the 262-residue chain is RRGSPQGGSHTTPHPDRLTPSPDDTYDDDTNHPNGRNNSIEIVPQLPPDRPLIELGVATLRKNFMEASCTVETNSGLAIFWKIGKPSVDAFNRGTTHTRLMRNGVPVYALVSTLRVPWLNVIPLTKITCAACPTNLVAGDGEDLNSCTTKSTTIPCPGQQRTHIFFSAKGHRAVCITSELVSQPTITWSVGSDRLRNDGFSQTWYGIQPGVCGILRSRFAFTAPPGALDQHQRTISVRSAHRTQRRAITKCYPTPTQLPTSL.

The tract at residues arginine 1–glutamine 45 is disordered.

It localises to the virion membrane. Virulence factor. The polypeptide is Glycoprotein gp2 (Equus caballus (Horse)).